Reading from the N-terminus, the 1118-residue chain is Constitutive coactivator of PPAR-gamma-like protein 1 (1118 aa).

Positions 339-405 (PPHYLAARPG…SLSEPAPLTL (67 aa)) are interaction with YES1, SRC and FYN. The interval 374–533 (AKPVAPQVPS…GTVQPIPCLL (160 aa)) is disordered. The segment covering 376–396 (PVAPQVPSPGGAPGQGPYPYS) has biased composition (low complexity). Polar residues-rich tracts occupy residues 405–420 (LDTSGKNLTEQNSYSN) and 435–447 (SPINPAQSGSPNH). Residues 481-502 (GWEKTGSHSEPQARGDPGDQTK) are compositionally biased toward basic and acidic residues. The span at 503-514 (AEGSSTASSGSQ) shows a compositional bias: polar residues. Thr-655 bears the Phosphothreonine mark. Positions 829 to 1118 (ADQAAKVEKM…LEAAVLNKEE (290 aa)) are RNA binding. Omega-N-methylarginine occurs at positions 873, 884, and 886. Positions 921-945 (AFSGSDSSRTSKSQGGVQPIPSQGG) are disordered. Residues 924-936 (GSDSSRTSKSQGG) show a composition bias toward polar residues. Lys-932 is modified (N6-acetyllysine). Phosphoserine is present on Ser-960. Residues Arg-982 and Arg-986 each carry the omega-N-methylarginine modification. Ser-1023 is modified (phosphoserine). The segment at 1025-1102 (EEVAKELKSK…HLNALSTDSA (78 aa)) is disordered. Over residues 1026–1037 (EVAKELKSKSGE) the composition is skewed to basic and acidic residues. Residues 1038–1051 (SKSSAMSSDGSLAE) are compositionally biased toward low complexity. Phosphoserine is present on residues Ser-1044, Ser-1045, and Ser-1048. Residues 1076–1101 (HSESALNNDSKTCNTNPHLNALSTDS) show a composition bias toward polar residues.

The protein belongs to the constitutive coactivator of PPAR-gamma family. As to quaternary structure, interacts with PURA. Interacts with SRC family protein kinases YES1, SRC and FYN. Upon tyrosine phosphorylation, interacts with PIK3R1. Interacts with IGF2BP1/IMP-1 in an RNA-dependent manner. Arg-982 is dimethylated, probably to asymmetric dimethylarginine. Post-translationally, phosphorylated on tyrosine by SRC family protein kinases upon oxidative stress, for instance following UV irradiation. Widely expressed. In gastric mucosa, detected in the bottom region of the foveolar epithelium (at protein level).

The protein localises to the cytoplasm. Its subcellular location is the cell membrane. Its function is as follows. Component of the oxidative stress-induced survival signaling. May regulate the activation of SRC family protein kinases. May act as a scaffolding protein enabling SRC family protein kinases to phosphorylate and activate PI3-kinase. Binds IGF2 RNA and promotes the production of IGF2 protein. The chain is Constitutive coactivator of PPAR-gamma-like protein 1 (FAM120A) from Homo sapiens (Human).